The primary structure comprises 500 residues: NAD(P)H-quinone oxidoreductase chain 4, chloroplastic (500 aa).

Helical transmembrane passes span 4-24, 37-57, 87-107, 113-130, 134-154, 167-187, 208-228, 242-262, 272-292, 305-325, 330-350, 386-406, 416-436, and 462-482; these read FPWL…IGFL, ICIC…HFQL, MGPV…AWPV, LFHF…GSFS, LLLF…LLSL, FILY…GMGL, ALEI…SPII, HYST…YGLV, AHSI…IYAA, IAYS…SITD, GSIL…FLAG, LALP…GIIT, ILIT…SLSM, and LFIL…PDFV.

This sequence belongs to the complex I subunit 4 family.

The protein localises to the plastid. The protein resides in the chloroplast thylakoid membrane. The catalysed reaction is a plastoquinone + NADH + (n+1) H(+)(in) = a plastoquinol + NAD(+) + n H(+)(out). It carries out the reaction a plastoquinone + NADPH + (n+1) H(+)(in) = a plastoquinol + NADP(+) + n H(+)(out). This Illicium oligandrum (Star anise) protein is NAD(P)H-quinone oxidoreductase chain 4, chloroplastic.